A 306-amino-acid polypeptide reads, in one-letter code: Ribonuclease Z (306 aa).

Residues H63, H65, D67, H68, H141, D211, and H269 each contribute to the Zn(2+) site. The active-site Proton acceptor is D67.

It belongs to the RNase Z family. Homodimer. Requires Zn(2+) as cofactor.

It catalyses the reaction Endonucleolytic cleavage of RNA, removing extra 3' nucleotides from tRNA precursor, generating 3' termini of tRNAs. A 3'-hydroxy group is left at the tRNA terminus and a 5'-phosphoryl group is left at the trailer molecule.. Its function is as follows. Zinc phosphodiesterase, which displays some tRNA 3'-processing endonuclease activity. Probably involved in tRNA maturation, by removing a 3'-trailer from precursor tRNA. The sequence is that of Ribonuclease Z from Macrococcus caseolyticus (strain JCSC5402) (Macrococcoides caseolyticum).